The chain runs to 817 residues: B lymphocyte-induced maturation protein 1 homolog (817 aa).

A disordered region spans residues 1-62 (MGQGSGDDGV…PAGVSASGAR (62 aa)). Residues 15–61 (FSSAAAAAHSPPHSPLSVGVSSASSATSSSSTPPSSTSPAGVSASGA) are compositionally biased toward low complexity. The SET domain occupies 103–241 (MNLILKSSSK…ANTELSFWFS (139 aa)). 4 C2H2-type zinc fingers span residues 508–530 (YACK…VRTH), 536–558 (FKCE…HLVH), 564–586 (HRCD…LRLH), and 592–614 (YTCD…KRLH). The segment at 620–642 (YSCGTCGKKYISPSGLRTHWKTT) adopts a C2H2-type 5; degenerate zinc-finger fold. The interval 709–817 (LLGQGPSGMQ…LPSLGLPHYP (109 aa)) is disordered. Positions 779–794 (QGGPSSGSGQQQHPQH) are enriched in low complexity.

In terms of assembly, interacts with dre-1; the interaction targets blmp-1 for proteasomal degradation. Interacts with ldb-1 and ham-3. Post-translationally, ubiquitinated by the SCF(dre-1) complex, leading to its degradation by the proteasome. In terms of tissue distribution, expressed in hypodermal, vulval, intestinal and distal tip cells.

The protein resides in the nucleus. It localises to the cytoplasm. In terms of biological role, transcription factor which binds to enhancer elements in the promoter region of genes. Regulates the expression of the transcription factor bed-3 to control vulval development. Promotes terminal differentiation in the hypodermis and is involved in regulation of gonadal outgrowth and entry into the dauer stage. Regulates the timing of dorsalward migration of the distal tip cells of the hermaphrodite gonad by inhibiting precocious unc-5 and lin-29 expression which in turn prevents early dorsalward turning. Plays a role in male tail tip morphogenesis. The sequence is that of B lymphocyte-induced maturation protein 1 homolog from Caenorhabditis elegans.